The sequence spans 297 residues: N-acetylneuraminate lyase (297 aa).

Ser47 and Thr48 together coordinate aceneuramate. Tyr137 serves as the catalytic Proton donor. Catalysis depends on Lys165, which acts as the Schiff-base intermediate with substrate. Aceneuramate-binding residues include Thr167, Gly189, Asp191, Glu192, and Ser208.

This sequence belongs to the DapA family. NanA subfamily. In terms of assembly, homotetramer.

The protein localises to the cytoplasm. It carries out the reaction aceneuramate = aldehydo-N-acetyl-D-mannosamine + pyruvate. It functions in the pathway amino-sugar metabolism; N-acetylneuraminate degradation; D-fructose 6-phosphate from N-acetylneuraminate: step 1/5. Catalyzes the reversible aldol cleavage of N-acetylneuraminic acid (sialic acid; Neu5Ac) to form pyruvate and N-acetylmannosamine (ManNAc) via a Schiff base intermediate. The polypeptide is N-acetylneuraminate lyase (Escherichia coli (strain SE11)).